We begin with the raw amino-acid sequence, 319 residues long: Lipoyl synthase (319 aa).

Residues 1 to 12 (MVTIVDTLSNTP) are compositionally biased toward polar residues. The disordered stretch occupies residues 1 to 32 (MVTIVDTLSNTPLRPRHPEKANRPDSISPAKP). [4Fe-4S] cluster is bound by residues C61, C66, C72, C87, C91, C94, and S300. Residues 73 to 289 (WDKKHATFMI…ETVAYTKGFL (217 aa)) enclose the Radical SAM core domain.

The protein belongs to the radical SAM superfamily. Lipoyl synthase family. Requires [4Fe-4S] cluster as cofactor.

The protein localises to the cytoplasm. It catalyses the reaction [[Fe-S] cluster scaffold protein carrying a second [4Fe-4S](2+) cluster] + N(6)-octanoyl-L-lysyl-[protein] + 2 oxidized [2Fe-2S]-[ferredoxin] + 2 S-adenosyl-L-methionine + 4 H(+) = [[Fe-S] cluster scaffold protein] + N(6)-[(R)-dihydrolipoyl]-L-lysyl-[protein] + 4 Fe(3+) + 2 hydrogen sulfide + 2 5'-deoxyadenosine + 2 L-methionine + 2 reduced [2Fe-2S]-[ferredoxin]. Its pathway is protein modification; protein lipoylation via endogenous pathway; protein N(6)-(lipoyl)lysine from octanoyl-[acyl-carrier-protein]: step 2/2. Its function is as follows. Catalyzes the radical-mediated insertion of two sulfur atoms into the C-6 and C-8 positions of the octanoyl moiety bound to the lipoyl domains of lipoate-dependent enzymes, thereby converting the octanoylated domains into lipoylated derivatives. The polypeptide is Lipoyl synthase (Bradyrhizobium sp. (strain BTAi1 / ATCC BAA-1182)).